Reading from the N-terminus, the 263-residue chain is Ribonuclease HII (263 aa).

Positions 71 to 262 (QAIAGIDEVG…VKSMCCDSTN (192 aa)) constitute an RNase H type-2 domain. Asp77, Glu78, and Asp172 together coordinate a divalent metal cation.

It belongs to the RNase HII family. The cofactor is Mn(2+). It depends on Mg(2+) as a cofactor.

The protein resides in the cytoplasm. The enzyme catalyses Endonucleolytic cleavage to 5'-phosphomonoester.. Its function is as follows. Endonuclease that specifically degrades the RNA of RNA-DNA hybrids. This is Ribonuclease HII from Streptococcus pyogenes serotype M12 (strain MGAS2096).